A 185-amino-acid chain; its full sequence is Ribosome-recycling factor (185 aa).

This sequence belongs to the RRF family.

Its subcellular location is the cytoplasm. Functionally, responsible for the release of ribosomes from messenger RNA at the termination of protein biosynthesis. May increase the efficiency of translation by recycling ribosomes from one round of translation to another. In Ehrlichia ruminantium (strain Welgevonden), this protein is Ribosome-recycling factor.